The primary structure comprises 241 residues: LAS seventeen-binding protein 1 (241 aa).

Ser2 is subject to N-acetylserine. Lys41 is covalently cross-linked (Glycyl lysine isopeptide (Lys-Gly) (interchain with G-Cter in ubiquitin)). Phosphoserine is present on Ser48. Residues 53 to 112 (DTEEYVEALYDFEAQQDGDLSLKTGDKIQVLEKISPDWYRGKSNNKIGIFPANYVKPAFT) form the SH3 domain. Lys79 is covalently cross-linked (Glycyl lysine isopeptide (Lys-Gly) (interchain with G-Cter in ubiquitin)). 2 positions are modified to phosphoserine: Ser114 and Ser116. Lys118 is covalently cross-linked (Glycyl lysine isopeptide (Lys-Gly) (interchain with G-Cter in ubiquitin)). Residues 118-131 (KSAEAASSSTVSRP) show a composition bias toward low complexity. A disordered region spans residues 118-213 (KSAEAASSST…QQSSGASSAF (96 aa)). A PY motif motif is present at residues 135-138 (PPSY). Residues 163–179 (APPPQQQQAPLPYPPPF) are compositionally biased toward pro residues. Positions 180 to 213 (TNYYQQPQQQYAPPSQQAPVEAQPQQSSGASSAF) are enriched in low complexity. Residue Lys219 forms a Glycyl lysine isopeptide (Lys-Gly) (interchain with G-Cter in ubiquitin) linkage.

This sequence belongs to the LSB1 family. Interacts with LAS17, RSP5 and SUP35. In terms of processing, ubiquitinated by RSP5.

It is found in the cytoplasm. Its subcellular location is the nucleus. The protein localises to the cytoskeleton. The protein resides in the actin patch. Functionally, involved in resistance to EDTA. This Saccharomyces cerevisiae (strain ATCC 204508 / S288c) (Baker's yeast) protein is LAS seventeen-binding protein 1 (LSB1).